We begin with the raw amino-acid sequence, 103 residues long: Phosphoribosyl-ATP pyrophosphatase (103 aa).

The protein belongs to the PRA-PH family.

It localises to the cytoplasm. It carries out the reaction 1-(5-phospho-beta-D-ribosyl)-ATP + H2O = 1-(5-phospho-beta-D-ribosyl)-5'-AMP + diphosphate + H(+). Its pathway is amino-acid biosynthesis; L-histidine biosynthesis; L-histidine from 5-phospho-alpha-D-ribose 1-diphosphate: step 2/9. The chain is Phosphoribosyl-ATP pyrophosphatase from Listeria monocytogenes serotype 4b (strain CLIP80459).